Reading from the N-terminus, the 32-residue chain is Cytochrome b6-f complex subunit 7 (32 aa).

A helical transmembrane segment spans residues 5–25 (IFGTAAIFWVLIPIGLVGGAL).

Belongs to the PetM family. The 4 large subunits of the cytochrome b6-f complex are cytochrome b6, subunit IV (17 kDa polypeptide, PetD), cytochrome f and the Rieske protein, while the 4 small subunits are PetG, PetL, PetM and PetN. The complex functions as a dimer.

The protein resides in the cellular thylakoid membrane. Functionally, component of the cytochrome b6-f complex, which mediates electron transfer between photosystem II (PSII) and photosystem I (PSI), cyclic electron flow around PSI, and state transitions. This chain is Cytochrome b6-f complex subunit 7, found in Synechococcus sp. (strain CC9902).